Here is an 86-residue protein sequence, read N- to C-terminus: Superoxide dismutase [Cu-Zn] (86 aa).

Residues 1-26 (AKEKGGKLTAGLAAGGHWNPNKAPHH) are disordered. The span at 7–16 (KLTAGLAAGG) shows a compositional bias: low complexity. A Cu cation-binding site is contributed by histidine 17. Positions 17, 26, 35, and 38 each coordinate Zn(2+). Histidine 73 lines the Cu cation pocket.

It belongs to the Cu-Zn superoxide dismutase family. In terms of assembly, homodimer. Requires Cu cation as cofactor. The cofactor is Zn(2+).

It is found in the periplasm. It catalyses the reaction 2 superoxide + 2 H(+) = H2O2 + O2. Its function is as follows. Destroys radicals which are normally produced within the cells and which are toxic to biological systems. This chain is Superoxide dismutase [Cu-Zn] (sodC), found in Mannheimia haemolytica (Pasteurella haemolytica).